We begin with the raw amino-acid sequence, 198 residues long: Large ribosomal subunit protein bL21 (198 aa).

It belongs to the bacterial ribosomal protein bL21 family. As to quaternary structure, part of the 50S ribosomal subunit. Contacts protein L20.

This protein binds to 23S rRNA in the presence of protein L20. This Ruegeria sp. (strain TM1040) (Silicibacter sp.) protein is Large ribosomal subunit protein bL21.